A 478-amino-acid polypeptide reads, in one-letter code: Ubiquitin carboxyl-terminal hydrolase calypso (478 aa).

Positions 11–239 constitute a UCH catalytic domain; the sequence is GWLELESDPG…IRFNLMAVVP (229 aa). The Nucleophile role is filled by cysteine 97. Histidine 176 (proton donor) is an active-site residue. In terms of domain architecture, ULD spans 400–428; it reads NYDEFICTFLSMLAHQGELGDLVSQHLIT. Residues 430–478 are positively charged C-terminal tail required for binding nucleosomes; the sequence is RKPNMGSVQNSGSRGVVRNYNKKTTTNGSSPKTPSSKRRRGRTKYRKRK. Polar residues predominate over residues 432-442; the sequence is PNMGSVQNSGS. Positions 432 to 478 are disordered; the sequence is PNMGSVQNSGSRGVVRNYNKKTTTNGSSPKTPSSKRRRGRTKYRKRK. Residues 464-478 show a composition bias toward basic residues; the sequence is SSKRRRGRTKYRKRK.

Belongs to the peptidase C12 family. BAP1 subfamily. As to quaternary structure, catalytic component of the polycomb repressive deubiquitinase (PR-DUB) complex, at least composed of caly/calypso, Asx and sba (MBD5/6 homolog). The PR-DUB complex associates with nucleosomes to mediate deubiquitination of histone H2AK118ub1 substrates; the association requires the positively charged C-terminal tail of caly, probably due to direct binding of DNA. Interacts (via ULD domain) with Asx (via DEUBAD domain); the interaction produces a stable heterodimer with a composite binding site for ubiquitin. Homodimerizes (via coiled-coil hinge-region between the UCH and ULD domains) to mediate assembly of 2 copies of the caly-Asx heterodimer into a bisymmetric tetramer; dimerization enhances PR-DUB association with nucleosomes.

The protein resides in the nucleus. The enzyme catalyses Thiol-dependent hydrolysis of ester, thioester, amide, peptide and isopeptide bonds formed by the C-terminal Gly of ubiquitin (a 76-residue protein attached to proteins as an intracellular targeting signal).. In terms of biological role, catalytic component of the polycomb repressive deubiquitinase (PR-DUB) complex, a complex that specifically mediates deubiquitination of histone H2A monoubiquitinated at 'Lys-119' (H2AK118ub1). Mediates bisymmetric organization of the PR-DUB complex and is involved in association with nucleosomes to mediate deubiquitination. Does not deubiquitinate monoubiquitinated histone H2B. Required to maintain the transcriptionally repressive state of homeotic genes throughout development. The PR-DUB complex has weak or no activity toward 'Lys-48'- and 'Lys-63'-linked polyubiquitin chains. Polycomb group (PcG) protein. The polypeptide is Ubiquitin carboxyl-terminal hydrolase calypso (Aedes aegypti (Yellowfever mosquito)).